Here is a 464-residue protein sequence, read N- to C-terminus: Cysteine--tRNA ligase (464 aa).

C29 contributes to the Zn(2+) binding site. The short motif at 31–41 (ATVQGDPHIGH) is the 'HIGH' region element. Residues C207, H232, and E236 each coordinate Zn(2+). The 'KMSKS' region signature appears at 263-267 (KMSKS). K266 is an ATP binding site.

The protein belongs to the class-I aminoacyl-tRNA synthetase family. As to quaternary structure, monomer. Zn(2+) serves as cofactor.

Its subcellular location is the cytoplasm. It carries out the reaction tRNA(Cys) + L-cysteine + ATP = L-cysteinyl-tRNA(Cys) + AMP + diphosphate. The polypeptide is Cysteine--tRNA ligase (Rhodococcus jostii (strain RHA1)).